The chain runs to 247 residues: Pyridoxine 5'-phosphate synthase (247 aa).

Asparagine 12 is a 3-amino-2-oxopropyl phosphate binding site. Position 14–15 (14–15) interacts with 1-deoxy-D-xylulose 5-phosphate; that stretch reads DH. Arginine 23 is a 3-amino-2-oxopropyl phosphate binding site. The active-site Proton acceptor is histidine 48. 1-deoxy-D-xylulose 5-phosphate is bound by residues arginine 50 and histidine 55. Glutamate 75 (proton acceptor) is an active-site residue. 1-deoxy-D-xylulose 5-phosphate is bound at residue threonine 105. Histidine 196 acts as the Proton donor in catalysis. 3-amino-2-oxopropyl phosphate-binding positions include glycine 197 and 218–219; that span reads GH.

The protein belongs to the PNP synthase family. Homooctamer; tetramer of dimers.

Its subcellular location is the cytoplasm. The enzyme catalyses 3-amino-2-oxopropyl phosphate + 1-deoxy-D-xylulose 5-phosphate = pyridoxine 5'-phosphate + phosphate + 2 H2O + H(+). The protein operates within cofactor biosynthesis; pyridoxine 5'-phosphate biosynthesis; pyridoxine 5'-phosphate from D-erythrose 4-phosphate: step 5/5. In terms of biological role, catalyzes the complicated ring closure reaction between the two acyclic compounds 1-deoxy-D-xylulose-5-phosphate (DXP) and 3-amino-2-oxopropyl phosphate (1-amino-acetone-3-phosphate or AAP) to form pyridoxine 5'-phosphate (PNP) and inorganic phosphate. The protein is Pyridoxine 5'-phosphate synthase of Pseudomonas fluorescens (strain Pf0-1).